The following is a 444-amino-acid chain: Cysteine proteinase 2 (444 aa).

The segment at residues 1 to 19 (MATSRAALCAVAVVCVVLA) is a signal peptide (or 27). Residues 20-124 (AACAPARAIH…HYRKARADLS (105 aa)) constitute a propeptide, activation peptide. Cys147 and Cys188 form a disulfide bridge. Cys150 is an active-site residue. Residue Asn228 is glycosylated (N-linked (GlcNAc...) asparagine). Catalysis depends on residues His289 and Asn309. Asn372 carries an N-linked (GlcNAc...) asparagine glycan.

This sequence belongs to the peptidase C1 family.

The protein localises to the lysosome. Its function is as follows. The cysteine proteinases have a potential role in host-parasite interaction and virulence. This chain is Cysteine proteinase 2 (CYS2), found in Leishmania pifanoi.